A 305-amino-acid polypeptide reads, in one-letter code: Insulin-like peptide (305 aa).

Residues 1-22 form the signal peptide; the sequence is MNLSSVYVLASLAVVCLLVKET. 3 cysteine pairs are disulfide-bonded: C28–C87, C40–C100, and C86–C91. Residues 52–76 constitute a propeptide, connecting peptide; the sequence is SVSKRAIDFISEQQAKDYMGAMPHI. The segment at 102–114 is d; sequence PYSTAPATATPVR. Residues 102–305 constitute a propeptide, d/E peptide; the sequence is PYSTAPATAT…RDSYHLTELR (204 aa). The span at 107–118 shows a compositional bias: low complexity; the sequence is PATATPVRTTEP. 2 disordered regions span residues 107-130 and 236-305; these read PATATPVRTTEPQPEEAEDDPLDG and HNQT…TELR. The interval 115-305 is e; it reads TTEPQPEEAE…RDSYHLTELR (191 aa). The segment covering 119–128 has biased composition (acidic residues); the sequence is QPEEAEDDPL. Basic and acidic residues-rich tracts occupy residues 236 to 245 and 291 to 305; these read HNQTDKKEPT and RRIESRDSYHLTELR.

The protein belongs to the insulin family.

The protein resides in the secreted. This chain is Insulin-like peptide (ILP), found in Branchiostoma californiense (California lancelet).